Consider the following 432-residue polypeptide: Adenosylhomocysteinase (432 aa).

Residue Ser-2 is modified to N-acetylserine. Substrate-binding residues include Thr-57, Asp-131, and Glu-156. Ser-183 carries the phosphoserine modification. The segment at 183–350 is NAD binding; it reads SVTKSKFDNL…EGRLVNLGCA (168 aa). Substrate contacts are provided by Lys-186 and Asp-190. Lys-186 is modified (N6-(2-hydroxyisobutyryl)lysine). A Phosphotyrosine modification is found at Tyr-193.

The protein belongs to the adenosylhomocysteinase family. In terms of assembly, homotetramer. Interaction with AHCYL1. It depends on NAD(+) as a cofactor.

Its subcellular location is the cytoplasm. It localises to the melanosome. The protein resides in the nucleus. It is found in the endoplasmic reticulum. It carries out the reaction S-adenosyl-L-homocysteine + H2O = L-homocysteine + adenosine. It functions in the pathway amino-acid biosynthesis; L-homocysteine biosynthesis; L-homocysteine from S-adenosyl-L-homocysteine: step 1/1. Functionally, catalyzes the hydrolysis of S-adenosyl-L-homocysteine to form adenosine and homocysteine. Binds copper ions. This Sus scrofa (Pig) protein is Adenosylhomocysteinase (AHCY).